Here is a 589-residue protein sequence, read N- to C-terminus: Kelch-like protein 25 (589 aa).

One can recognise a BTB domain in the interval threonine 46 to glutamate 114. Residues cysteine 149–valine 250 enclose the BACK domain. Kelch repeat units lie at residues threonine 296 to cysteine 340, lysine 341 to asparagine 388, cysteine 389 to leucine 444, leucine 446 to serine 492, glutamine 493 to asparagine 538, and lysine 539 to lysine 585.

In terms of assembly, component of the BCR(KLHL25) E3 ubiquitin ligase complex, at least composed of CUL3, KLHL25 and RBX1.

The protein operates within protein modification; protein ubiquitination. In terms of biological role, substrate-specific adapter of a BCR (BTB-CUL3-RBX1) E3 ubiquitin ligase complex involved in various processes, such as translation homeostasis and lipid synthesis. The BCR(KLHL25) ubiquitin ligase complex acts by mediating ubiquitination of hypophosphorylated EIF4EBP1 (4E-BP1): ubiquitination and subsequent degradation of hypophosphorylated EIF4EBP1 (4E-BP1) probably serves as a homeostatic mechanism to maintain translation and prevent eIF4E inhibition when eIF4E levels are low. The BCR(KLHL25) complex does not target EIF4EBP1 (4E-BP1) when it is hyperphosphorylated or associated with eIF4E. The BCR(KLHL25) complex also acts as a regulator of lipid synthesis by mediating ubiquitination and degradation of ACLY, thereby inhibiting lipid synthesis. BCR(KLHL25)-mediated degradation of ACLY promotes fatty acid oxidation and is required for differentiation of inducible regulatory T (iTreg) cells. This chain is Kelch-like protein 25, found in Rattus norvegicus (Rat).